We begin with the raw amino-acid sequence, 428 residues long: D-amino acid dehydrogenase (428 aa).

Residue 3-17 coordinates FAD; sequence VVILGSGVVGVASAY.

It belongs to the DadA oxidoreductase family. It depends on FAD as a cofactor.

It catalyses the reaction a D-alpha-amino acid + A + H2O = a 2-oxocarboxylate + AH2 + NH4(+). It functions in the pathway amino-acid degradation; D-alanine degradation; NH(3) and pyruvate from D-alanine: step 1/1. Its function is as follows. Oxidative deamination of D-amino acids. The protein is D-amino acid dehydrogenase of Burkholderia cenocepacia (strain ATCC BAA-245 / DSM 16553 / LMG 16656 / NCTC 13227 / J2315 / CF5610) (Burkholderia cepacia (strain J2315)).